We begin with the raw amino-acid sequence, 114 residues long: MIKLRLKRFGKKKEASFRIVACNSTSRRDGRPLQELGFYNPRTKETRLDTEALRIRLTQGAQPTDVVRTLLEKGGLLEKKVRPSIAIGKAKLEKEKIAKAKSKEAESDSKEAES.

It belongs to the bacterial ribosomal protein bS16 family.

This chain is Small ribosomal subunit protein bS16, found in Prochlorococcus marinus subsp. pastoris (strain CCMP1986 / NIES-2087 / MED4).